Reading from the N-terminus, the 335-residue chain is Deoxyhypusine hydroxylase (335 aa).

HEAT-like PBS-type repeat units follow at residues 74 to 100, 107 to 133, 203 to 233, 241 to 267, and 274 to 301; these read LKHE…VLED, CRHE…LRDD, KRYR…LAEG, FRHE…TLSD, and VRHE…FVND. Fe cation contacts are provided by His76, Glu77, His109, and Glu110. Residues His243, Glu244, His276, and Glu277 each contribute to the Fe cation site.

Belongs to the deoxyhypusine hydroxylase family. It depends on Fe(2+) as a cofactor.

It is found in the cytoplasm. The protein localises to the nucleus. The enzyme catalyses [eIF5A protein]-deoxyhypusine + AH2 + O2 = [eIF5A protein]-hypusine + A + H2O. It functions in the pathway protein modification; eIF5A hypusination. Catalyzes the hydroxylation of the N(6)-(4-aminobutyl)-L-lysine intermediate to form hypusine, an essential post-translational modification only found in mature eIF-5A factor. This is Deoxyhypusine hydroxylase from Coccidioides immitis (strain RS) (Valley fever fungus).